The following is a 307-amino-acid chain: Homoserine kinase (307 aa).

92-102 lines the ATP pocket; the sequence is PLARGLGSSAT.

Belongs to the GHMP kinase family. Homoserine kinase subfamily.

The protein resides in the cytoplasm. It catalyses the reaction L-homoserine + ATP = O-phospho-L-homoserine + ADP + H(+). Its pathway is amino-acid biosynthesis; L-threonine biosynthesis; L-threonine from L-aspartate: step 4/5. In terms of biological role, catalyzes the ATP-dependent phosphorylation of L-homoserine to L-homoserine phosphate. The chain is Homoserine kinase (thrB) from Microchaete diplosiphon (Fremyella diplosiphon).